The sequence spans 302 residues: N-acetyl-D-glucosamine kinase (302 aa).

ATP is bound by residues 4 to 11 and 133 to 140; these read GFDVGGTK and GFGGGLVY. Positions 157, 177, 179, and 184 each coordinate Zn(2+).

The protein belongs to the ROK (NagC/XylR) family. NagK subfamily.

It carries out the reaction N-acetyl-D-glucosamine + ATP = N-acetyl-D-glucosamine 6-phosphate + ADP + H(+). It functions in the pathway cell wall biogenesis; peptidoglycan recycling. Functionally, catalyzes the phosphorylation of N-acetyl-D-glucosamine (GlcNAc) derived from cell-wall degradation, yielding GlcNAc-6-P. The chain is N-acetyl-D-glucosamine kinase from Vibrio atlanticus (strain LGP32) (Vibrio splendidus (strain Mel32)).